The sequence spans 246 residues: MKEKYTVEKVYENIKVEDGIYKLSIKGEFEVRPGQFYLLRAWDIEPTLSRPISIYDADDEKISFLYSVVGKGTEILSKLKSGDEIKITGPLGNGFNVKRISGKVAIVCGGIGVAPMVYLAKNLKNCNVDFYAGFKTVSKTVDNVEKYVKELKLSTEDGSIGHKGYVTDNFKPEEYDYVLCCGPEIMMYKVVKMCEQKNVPVYISMEKKMACGIGACLVCTCKTKGGRRRACKEGPVFLGSELILND.

The FAD-binding FR-type domain maps to 3 to 97 (EKYTVEKVYE…TGPLGNGFNV (95 aa)). Residues 50–53 (RPIS) and 72–73 (GT) contribute to the FAD site. Positions 211, 216, 219, and 231 each coordinate [2Fe-2S] cluster.

It belongs to the PyrK family. In terms of assembly, heterotetramer of 2 PyrK and 2 PyrD type B subunits. The cofactor is [2Fe-2S] cluster. FAD serves as cofactor.

It functions in the pathway pyrimidine metabolism; UMP biosynthesis via de novo pathway; orotate from (S)-dihydroorotate (NAD(+) route): step 1/1. Responsible for channeling the electrons from the oxidation of dihydroorotate from the FMN redox center in the PyrD type B subunit to the ultimate electron acceptor NAD(+). The protein is Dihydroorotate dehydrogenase B (NAD(+)), electron transfer subunit of Clostridium acetobutylicum (strain ATCC 824 / DSM 792 / JCM 1419 / IAM 19013 / LMG 5710 / NBRC 13948 / NRRL B-527 / VKM B-1787 / 2291 / W).